Here is a 297-residue protein sequence, read N- to C-terminus: Ribosomal protein L11 methyltransferase (297 aa).

S-adenosyl-L-methionine contacts are provided by Thr-139, Gly-164, Asp-186, and Asn-233.

The protein belongs to the methyltransferase superfamily. PrmA family.

The protein localises to the cytoplasm. It carries out the reaction L-lysyl-[protein] + 3 S-adenosyl-L-methionine = N(6),N(6),N(6)-trimethyl-L-lysyl-[protein] + 3 S-adenosyl-L-homocysteine + 3 H(+). In terms of biological role, methylates ribosomal protein L11. The chain is Ribosomal protein L11 methyltransferase from Trichodesmium erythraeum (strain IMS101).